Reading from the N-terminus, the 244-residue chain is 23S rRNA (guanosine-2'-O-)-methyltransferase RlmB (244 aa).

Residues G196, I216, and L225 each coordinate S-adenosyl-L-methionine.

This sequence belongs to the class IV-like SAM-binding methyltransferase superfamily. RNA methyltransferase TrmH family. RlmB subfamily. Homodimer.

It is found in the cytoplasm. The catalysed reaction is guanosine(2251) in 23S rRNA + S-adenosyl-L-methionine = 2'-O-methylguanosine(2251) in 23S rRNA + S-adenosyl-L-homocysteine + H(+). Its function is as follows. Specifically methylates the ribose of guanosine 2251 in 23S rRNA. The polypeptide is 23S rRNA (guanosine-2'-O-)-methyltransferase RlmB (Photorhabdus laumondii subsp. laumondii (strain DSM 15139 / CIP 105565 / TT01) (Photorhabdus luminescens subsp. laumondii)).